Here is a 102-residue protein sequence, read N- to C-terminus: Integration host factor subunit alpha (102 aa).

It belongs to the bacterial histone-like protein family. Heterodimer of an alpha and a beta chain.

Functionally, this protein is one of the two subunits of integration host factor, a specific DNA-binding protein that functions in genetic recombination as well as in transcriptional and translational control. This is Integration host factor subunit alpha from Albidiferax ferrireducens (strain ATCC BAA-621 / DSM 15236 / T118) (Rhodoferax ferrireducens).